Consider the following 435-residue polypeptide: Gamma-glutamyl phosphate reductase (435 aa).

Belongs to the gamma-glutamyl phosphate reductase family.

It localises to the cytoplasm. It catalyses the reaction L-glutamate 5-semialdehyde + phosphate + NADP(+) = L-glutamyl 5-phosphate + NADPH + H(+). Its pathway is amino-acid biosynthesis; L-proline biosynthesis; L-glutamate 5-semialdehyde from L-glutamate: step 2/2. In terms of biological role, catalyzes the NADPH-dependent reduction of L-glutamate 5-phosphate into L-glutamate 5-semialdehyde and phosphate. The product spontaneously undergoes cyclization to form 1-pyrroline-5-carboxylate. The chain is Gamma-glutamyl phosphate reductase from Synechococcus sp. (strain WH7803).